Reading from the N-terminus, the 489-residue chain is Cytochrome P450 2C70 (489 aa).

Residues 1 to 27 form the signal peptide; the sequence is MALFIFLGIWLSCLVFLFLWNQHHVRR. A heme-binding site is contributed by C434.

Belongs to the cytochrome P450 family. The cofactor is heme.

It localises to the endoplasmic reticulum membrane. The protein localises to the microsome membrane. The catalysed reaction is chenodeoxycholate + reduced [NADPH--hemoprotein reductase] + O2 = alpha-muricholate + oxidized [NADPH--hemoprotein reductase] + H2O + H(+). The enzyme catalyses ursodeoxycholate + reduced [NADPH--hemoprotein reductase] + O2 = beta-muricholate + oxidized [NADPH--hemoprotein reductase] + H2O + H(+). Functionally, a cytochrome P450 monooxygenase involved in muricholic acid (MCA) synthesis. Hydroxylates at the 6-beta position two major bile acids, chenodeoxycholic acid (CDCA) and ursodeoxycholic acid (UDCA) to form alpha-MCA and beta-MCA, respectively. May regulate NR1H4/farnesoid X receptor signaling, as taurine-conjugated MCAs are antagonists of NR1H4. Mechanistically, uses molecular oxygen inserting one oxygen atom into a substrate, and reducing the second into a water molecule, with two electrons provided by NADPH via cytochrome P450 reductase (CPR; NADPH-ferrihemoprotein reductase). This chain is Cytochrome P450 2C70, found in Rattus norvegicus (Rat).